Reading from the N-terminus, the 344-residue chain is Succinylglutamate desuccinylase (344 aa).

His-63, Glu-66, and His-160 together coordinate Zn(2+). The active site involves Glu-224.

Belongs to the AspA/AstE family. Succinylglutamate desuccinylase subfamily. The cofactor is Zn(2+).

It carries out the reaction N-succinyl-L-glutamate + H2O = L-glutamate + succinate. The protein operates within amino-acid degradation; L-arginine degradation via AST pathway; L-glutamate and succinate from L-arginine: step 5/5. Functionally, transforms N(2)-succinylglutamate into succinate and glutamate. This is Succinylglutamate desuccinylase from Shewanella putrefaciens (strain CN-32 / ATCC BAA-453).